Consider the following 226-residue polypeptide: PKHD-type hydroxylase Sde_2812 (226 aa).

In terms of domain architecture, Fe2OG dioxygenase spans 78–178; sequence KIFPPLFNCY…RLASFFWLQS (101 aa). Fe cation contacts are provided by H96, D98, and H159. Residue R169 participates in 2-oxoglutarate binding.

The cofactor is Fe(2+). Requires L-ascorbate as cofactor.

In Saccharophagus degradans (strain 2-40 / ATCC 43961 / DSM 17024), this protein is PKHD-type hydroxylase Sde_2812.